Reading from the N-terminus, the 310-residue chain is Olfactory receptor 8G3 (310 aa).

Residues 1 to 25 (MDPGNHSSVTESILAGLSEQPELQL) lie on the Extracellular side of the membrane. N5 carries an N-linked (GlcNAc...) asparagine glycan. Residues 26-46 (RLFLLFLGICVVTVVGNLGMI) form a helical membrane-spanning segment. Topologically, residues 47-54 (TLIGLSSH) are cytoplasmic. Residues 55–75 (LHTPMYYFLSSLSFIDFCHST) traverse the membrane as a helical segment. Topologically, residues 76–99 (VITPKMLVNFATEKNIISYPECMA) are extracellular. C97 and C189 are oxidised to a cystine. Residues 100 to 120 (QLYLFSIFAIAECHMLAAMAY) form a helical membrane-spanning segment. The Cytoplasmic portion of the chain corresponds to 121 to 139 (DCYVAICSPLLYNVIMSYH). The helical transmembrane segment at 140–160 (HCFWLTVGVYILGILGSTIHT) threads the bilayer. The Extracellular portion of the chain corresponds to 161-197 (SFMLRLFLCKTNVINHYFCDLFPLLGLSCSSTYINEL). Residues 198-217 (LVLVLSAFNILMPALTILAS) traverse the membrane as a helical segment. Residues 218 to 237 (YIFIIASILRIHSTEGRSKA) lie on the Cytoplasmic side of the membrane. Residues 238 to 258 (FSTCSSHILAVAVFFGSAAFM) form a helical membrane-spanning segment. Topologically, residues 259-271 (YLQPSSVSSMDQR) are extracellular. The chain crosses the membrane as a helical span at residues 272 to 292 (KVSSVFYTTIVPMLNPLIYSL). The Cytoplasmic segment spans residues 293 to 310 (RNKDVKLAVKKILHQTAC).

Belongs to the G-protein coupled receptor 1 family.

It is found in the cell membrane. Its function is as follows. Odorant receptor. This chain is Olfactory receptor 8G3, found in Homo sapiens (Human).